Here is an 843-residue protein sequence, read N- to C-terminus: DNA gyrase subunit A (843 aa).

The Topo IIA-type catalytic domain maps to 61–528 (LPDVRDGLKP…ESSTFNAEDL (468 aa)). The active-site O-(5'-phospho-DNA)-tyrosine intermediate is Y149. The GyrA-box signature appears at 555 to 561 (QKRGGKG).

It belongs to the type II topoisomerase GyrA/ParC subunit family. In terms of assembly, heterotetramer, composed of two GyrA and two GyrB chains. In the heterotetramer, GyrA contains the active site tyrosine that forms a transient covalent intermediate with DNA, while GyrB binds cofactors and catalyzes ATP hydrolysis.

It is found in the cytoplasm. The catalysed reaction is ATP-dependent breakage, passage and rejoining of double-stranded DNA.. Its function is as follows. A type II topoisomerase that negatively supercoils closed circular double-stranded (ds) DNA in an ATP-dependent manner to modulate DNA topology and maintain chromosomes in an underwound state. Negative supercoiling favors strand separation, and DNA replication, transcription, recombination and repair, all of which involve strand separation. Also able to catalyze the interconversion of other topological isomers of dsDNA rings, including catenanes and knotted rings. Type II topoisomerases break and join 2 DNA strands simultaneously in an ATP-dependent manner. This chain is DNA gyrase subunit A, found in Leptospira biflexa serovar Patoc (strain Patoc 1 / Ames).